Here is a 118-residue protein sequence, read N- to C-terminus: Putative pterin-4-alpha-carbinolamine dehydratase (118 aa).

Belongs to the pterin-4-alpha-carbinolamine dehydratase family.

The catalysed reaction is (4aS,6R)-4a-hydroxy-L-erythro-5,6,7,8-tetrahydrobiopterin = (6R)-L-erythro-6,7-dihydrobiopterin + H2O. The polypeptide is Putative pterin-4-alpha-carbinolamine dehydratase (Pseudomonas fluorescens (strain ATCC BAA-477 / NRRL B-23932 / Pf-5)).